A 466-amino-acid polypeptide reads, in one-letter code: Argininosuccinate lyase 1 (466 aa).

Belongs to the lyase 1 family. Argininosuccinate lyase subfamily.

The protein localises to the cytoplasm. The enzyme catalyses 2-(N(omega)-L-arginino)succinate = fumarate + L-arginine. Its pathway is amino-acid biosynthesis; L-arginine biosynthesis; L-arginine from L-ornithine and carbamoyl phosphate: step 3/3. The protein is Argininosuccinate lyase 1 of Agrobacterium fabrum (strain C58 / ATCC 33970) (Agrobacterium tumefaciens (strain C58)).